Reading from the N-terminus, the 423-residue chain is Adenylosuccinate synthetase (423 aa).

GTP-binding positions include 12-18 (GDEGKGK) and 40-42 (GHT). Asp13 serves as the catalytic Proton acceptor. Asp13 and Gly40 together coordinate Mg(2+). Residues 13 to 16 (DEGK), 38 to 41 (NAGH), Thr129, Arg143, Gln221, Thr236, and Arg300 contribute to the IMP site. His41 functions as the Proton donor in the catalytic mechanism. Position 296–302 (296–302 (AVTGRKR)) interacts with substrate. Residues Arg302, 328–330 (KSD), and 408–410 (SVG) each bind GTP.

The protein belongs to the adenylosuccinate synthetase family. Homodimer. The cofactor is Mg(2+).

The protein resides in the cytoplasm. It catalyses the reaction IMP + L-aspartate + GTP = N(6)-(1,2-dicarboxyethyl)-AMP + GDP + phosphate + 2 H(+). Its pathway is purine metabolism; AMP biosynthesis via de novo pathway; AMP from IMP: step 1/2. Functionally, plays an important role in the de novo pathway of purine nucleotide biosynthesis. Catalyzes the first committed step in the biosynthesis of AMP from IMP. The polypeptide is Adenylosuccinate synthetase (Parabacteroides distasonis (strain ATCC 8503 / DSM 20701 / CIP 104284 / JCM 5825 / NCTC 11152)).